Consider the following 387-residue polypeptide: Acyl-CoA dehydrogenase FadE29 (387 aa).

FAD contacts are provided by residues 123-126 (IGYT), T132, and T158. The Proton acceptor role is filled by E241. 367-369 (VNE) lines the FAD pocket.

Belongs to the acyl-CoA dehydrogenase family. In terms of assembly, heterotetramer composed of FadE28 and FadE29. It depends on FAD as a cofactor.

It catalyses the reaction 3-oxochol-4-en-22-oyl-CoA + A = 3-oxochola-4,17-dien-22-oyl-CoA + AH2. It participates in steroid metabolism; cholesterol degradation. In terms of biological role, involved in the third cycle of side chain dehydrogenation in the beta-oxidation of cholesterol catabolism. Contributes partly to the virulence by increasing the efficiency of beta-oxidation. Catalyzes the dehydrogenation of 2'-propanoyl-CoA ester side chains of 3-oxo-4-pregnene-20-carboxyl-CoA (3-OPC-CoA) to yield 3-oxo-4,17-pregnadiene-20-carboxyl-CoA (3-OPDC-CoA). Also able to dehydrogenate steroyl-CoA such as 3-oxo-chol-4-en-24-oyl-CoA (3-OCO-CoA), 1beta-(2'-propanoyl-CoA)-3a-alpha-H- 7a-beta-methylhexahydro-4-indanone (indanone-CoA ester), hexahydroindanone and pregenenone. This is Acyl-CoA dehydrogenase FadE29 (fadE29) from Mycobacterium tuberculosis (strain ATCC 25618 / H37Rv).